The primary structure comprises 396 residues: Ribosomal RNA small subunit methyltransferase H (396 aa).

S-adenosyl-L-methionine is bound by residues 101–103 (GGH), Asp120, Tyr147, Asp171, and Gln178.

The protein belongs to the methyltransferase superfamily. RsmH family.

The protein localises to the cytoplasm. It catalyses the reaction cytidine(1402) in 16S rRNA + S-adenosyl-L-methionine = N(4)-methylcytidine(1402) in 16S rRNA + S-adenosyl-L-homocysteine + H(+). In terms of biological role, specifically methylates the N4 position of cytidine in position 1402 (C1402) of 16S rRNA. In Mycobacterium bovis (strain ATCC BAA-935 / AF2122/97), this protein is Ribosomal RNA small subunit methyltransferase H.